The primary structure comprises 328 residues: m7GpppN-mRNA hydrolase NUDT17 (328 aa).

One can recognise a Nudix hydrolase domain in the interval 90 to 236; that stretch reads GVDLGVAVIL…DGTETPGLLP (147 aa). The short motif at 127-148 is the Nudix box element; it reads GHVELEEELLDGGLRELWEESG. The Mg(2+) site is built by glutamate 142 and glutamate 146. The disordered stretch occupies residues 299-328; sequence PCKSAAYLDPGPAKEEWNMDPLPPNQGSGK.

It belongs to the Nudix hydrolase family. Mg(2+) serves as cofactor. The cofactor is Mn(2+).

It carries out the reaction a 5'-end (N(7)-methyl 5'-triphosphoguanosine)-ribonucleoside in mRNA + H2O = N(7)-methyl-GDP + a 5'-end phospho-ribonucleoside in mRNA + 2 H(+). Functionally, acts as a decapping enzyme capable of hydrolyzing monomethylated capped RNAs (in vitro). Hydrolyzes monomethylated capped RNA after alpha and beta phosphates to form N(7)-methyl-GDP. Shows low activity towards unmethylated capped RNA. This Homo sapiens (Human) protein is m7GpppN-mRNA hydrolase NUDT17 (NUDT17).